A 521-amino-acid polypeptide reads, in one-letter code: Lymphocyte activation gene 3 protein (521 aa).

The first 23 residues, 1–23 (MREDLLLGFLLLGLLWEAPVVSS), serve as a signal peptide directing secretion. The Extracellular segment spans residues 24–442 (GPGKELPVVW…ISGDLKGGHL (419 aa)). The Ig-like V-type domain occupies 37 to 163 (GAPVHLPCSL…LSCSLRLRVG (127 aa)). The interval 37–246 (GAPVHLPCSL…LTYRDGFNVS (210 aa)) is interaction with FGL1. A disulfide bridge connects residues cysteine 44 and cysteine 156. Ig-like C2-type domains are found at residues 165 to 246 (ASMI…FNVS), 258 to 341 (PVAP…ATVT), and 345 to 412 (ITVT…EGQR). Asparagine 184 carries N-linked (GlcNAc...) asparagine glycosylation. Cysteine 185 and cysteine 235 are disulfide-bonded. 4 N-linked (GlcNAc...) asparagine glycosylation sites follow: asparagine 244, asparagine 309, asparagine 337, and asparagine 381. Cysteines 276 and 327 form a disulfide. A disulfide bridge links cysteine 363 with cysteine 405. A connecting peptide region spans residues 422 to 442 (ESSSGAHSARRISGDLKGGHL). The helical transmembrane segment at 443 to 463 (VLVLILGALSLFLLVAGAFGF) threads the bilayer. Residues 464–521 (HWWRKQLLLRRFSALEHGIQPFPAQRKIEELERELETEMGQEPEPEPEPQLEPEPRQL) lie on the Cytoplasmic side of the membrane. Residues 490–495 (KIEELE) carry the KIEELE motif motif. Positions 493 to 518 (ELERELETEMGQEPEPEPEPQLEPEP) are 13 X 2 AA tandem repeats of E-X. A disordered region spans residues 493–521 (ELERELETEMGQEPEPEPEPQLEPEPRQL). A compositionally biased stretch (acidic residues) spans 500 to 514 (TEMGQEPEPEPEPQL).

The protein belongs to the LAG3 family. In terms of assembly, interacts with MHC class II (MHC-II); selectively recognizes stable complexes of peptide and MHC-II. Interacts with FGL1 (via the Fibrinogen C-terminal domain). Post-translationally, proteolytically cleaved by ADAM10 and ADAM17 within the connecting peptide region, leading to release of Secreted lymphocyte activation gene 3 protein (sLAG-3). ADAM10 mediates constitutive cleavage, but cleavage increases following T-cell activation, whereas shedding by ADAM17 is induced by TCR signaling in a PRKCQ-dependent manner. Primarily expressed in activated CD4(+) and CD8(+) T-cells. Also expressed in a subset of regulatory T-cells (Tregs), such as natural CD4(+)CD25(+) Tregs. Also expressed on plasmacytoid dendritic cells (pDCs).

The protein resides in the cell membrane. It is found in the secreted. Lymphocyte activation gene 3 protein: Inhibitory receptor on antigen activated T-cells. Delivers inhibitory signals upon binding to ligands, such as FGL1. FGL1 constitutes a major ligand of LAG3 and is responsible for LAG3 T-cell inhibitory function. Following TCR engagement, LAG3 associates with CD3-TCR in the immunological synapse and directly inhibits T-cell activation. May inhibit antigen-specific T-cell activation in synergy with PDCD1/PD-1, possibly by acting as a coreceptor for PDCD1/PD-1. Negatively regulates the proliferation, activation, effector function and homeostasis of both CD8(+) and CD4(+) T-cells. Also mediates immune tolerance: constitutively expressed on a subset of regulatory T-cells (Tregs) and contributes to their suppressive function. Also acts as a negative regulator of plasmacytoid dendritic cell (pDCs) activation. Binds MHC class II (MHC-II); the precise role of MHC-II-binding is however unclear. Its function is as follows. May function as a ligand for MHC class II (MHC-II) on antigen-presenting cells (APC), promoting APC activation/maturation and driving Th1 immune response. The chain is Lymphocyte activation gene 3 protein from Mus musculus (Mouse).